Reading from the N-terminus, the 343-residue chain is N-acetyl-gamma-glutamyl-phosphate reductase (343 aa).

Cys147 is a catalytic residue.

The protein belongs to the NAGSA dehydrogenase family. Type 1 subfamily.

The protein resides in the cytoplasm. The catalysed reaction is N-acetyl-L-glutamate 5-semialdehyde + phosphate + NADP(+) = N-acetyl-L-glutamyl 5-phosphate + NADPH + H(+). The protein operates within amino-acid biosynthesis; L-arginine biosynthesis; N(2)-acetyl-L-ornithine from L-glutamate: step 3/4. In terms of biological role, catalyzes the NADPH-dependent reduction of N-acetyl-5-glutamyl phosphate to yield N-acetyl-L-glutamate 5-semialdehyde. This chain is N-acetyl-gamma-glutamyl-phosphate reductase, found in Staphylococcus saprophyticus subsp. saprophyticus (strain ATCC 15305 / DSM 20229 / NCIMB 8711 / NCTC 7292 / S-41).